We begin with the raw amino-acid sequence, 183 residues long: ATP-dependent protease subunit HslV (183 aa).

Threonine 13 is a catalytic residue. 3 residues coordinate Na(+): glycine 168, cysteine 171, and threonine 174.

The protein belongs to the peptidase T1B family. HslV subfamily. As to quaternary structure, a double ring-shaped homohexamer of HslV is capped on each side by a ring-shaped HslU homohexamer. The assembly of the HslU/HslV complex is dependent on binding of ATP.

The protein resides in the cytoplasm. It catalyses the reaction ATP-dependent cleavage of peptide bonds with broad specificity.. With respect to regulation, allosterically activated by HslU binding. Its function is as follows. Protease subunit of a proteasome-like degradation complex believed to be a general protein degrading machinery. The chain is ATP-dependent protease subunit HslV from Xanthomonas campestris pv. campestris (strain ATCC 33913 / DSM 3586 / NCPPB 528 / LMG 568 / P 25).